Consider the following 371-residue polypeptide: Putative RNA-binding protein Luc7-like 1 (371 aa).

Coiled coils occupy residues 87 to 177 and 220 to 256; these read MDHL…RNSM and QIRE…EERL. Residues 232–257 show a composition bias toward basic and acidic residues; it reads VAEKQEKRNQDRLRRREEREREERLG. Residues 232 to 371 are disordered; sequence VAEKQEKRNQ…RSEEKEAGEI (140 aa). Residues 258-317 show a composition bias toward basic residues; sequence RRSGSRTRDRRRSRSRDRRRRRSRSTSRERRKFSRSRSRDRYRRHRSRSRSHSRGHRRAS. 2 stretches are compositionally biased toward basic and acidic residues: residues 318-351 and 361-371; these read RDRS…DWRL and RRSEEKEAGEI. Phosphoserine occurs at positions 336 and 363.

Belongs to the Luc7 family.

May bind to RNA via its Arg/Ser-rich domain. In Mus musculus (Mouse), this protein is Putative RNA-binding protein Luc7-like 1 (Luc7l).